The sequence spans 77 residues: Conotoxin ArMSGL-0143 (77 aa).

The signal sequence occupies residues 1 to 22 (MSGLGIMLLTLLLLVFMETSHQ). The propeptide occupies 23–44 (DAGEKQATQRDAINVRRRRSLT). Intrachain disulfides connect cysteine 51/cysteine 63, cysteine 55/cysteine 71, and cysteine 62/cysteine 75. Position 76 is a phenylalanine amide (phenylalanine 76).

The protein belongs to the conotoxin O3 superfamily. Expressed by the venom duct.

Its subcellular location is the secreted. This is Conotoxin ArMSGL-0143 from Conus arenatus (Sand-dusted cone).